A 144-amino-acid chain; its full sequence is L-fucose mutarotase (144 aa).

His-22 acts as the Proton donor in catalysis. Substrate contacts are provided by residues Asp-30, Arg-109, and 131-133 (YGN).

Belongs to the RbsD / FucU family. FucU mutarotase subfamily. Homodecamer.

It localises to the cytoplasm. It catalyses the reaction alpha-L-fucose = beta-L-fucose. Its pathway is carbohydrate metabolism; L-fucose metabolism. In terms of biological role, involved in the anomeric conversion of L-fucose. This chain is L-fucose mutarotase, found in Haemophilus influenzae (strain PittEE).